The chain runs to 507 residues: Lysine--tRNA ligase (507 aa).

Residues glutamate 416 and glutamate 423 each contribute to the Mg(2+) site.

This sequence belongs to the class-II aminoacyl-tRNA synthetase family. In terms of assembly, homodimer. The cofactor is Mg(2+).

Its subcellular location is the cytoplasm. It carries out the reaction tRNA(Lys) + L-lysine + ATP = L-lysyl-tRNA(Lys) + AMP + diphosphate. This is Lysine--tRNA ligase from Hahella chejuensis (strain KCTC 2396).